Reading from the N-terminus, the 141-residue chain is MAVERTLSIIKPDAVAQNAIGEILARFERSGLRVVAARMVRLSTEQAESFYAVHKERPFFNDLVGFMTSGPVMVQVLEGEDAIRKNREIMGATNPKEAAAGTLRHDFAESIDANAVHGSDSPETAENEIEFFFKADEICSR.

Residues Lys-11, Phe-59, Arg-87, Thr-93, Arg-104, and Asn-114 each contribute to the ATP site. The Pros-phosphohistidine intermediate role is filled by His-117.

The protein belongs to the NDK family. In terms of assembly, homotetramer. Mg(2+) is required as a cofactor.

It localises to the cytoplasm. The catalysed reaction is a 2'-deoxyribonucleoside 5'-diphosphate + ATP = a 2'-deoxyribonucleoside 5'-triphosphate + ADP. It catalyses the reaction a ribonucleoside 5'-diphosphate + ATP = a ribonucleoside 5'-triphosphate + ADP. Major role in the synthesis of nucleoside triphosphates other than ATP. The ATP gamma phosphate is transferred to the NDP beta phosphate via a ping-pong mechanism, using a phosphorylated active-site intermediate. This is Nucleoside diphosphate kinase from Halorhodospira halophila (strain DSM 244 / SL1) (Ectothiorhodospira halophila (strain DSM 244 / SL1)).